The chain runs to 285 residues: GTP-binding protein 8 (285 aa).

Residues 110–283 (QQPEVCFIGR…KCFIADITGS (174 aa)) form the EngB-type G domain. GTP contacts are provided by residues 118–125 (GRSNVGKS), 147–151 (GHTKK), 165–168 (DMPG), 227–230 (TKID), and 262–264 (ISA). Mg(2+) is bound by residues Ser-125 and Thr-149.

This sequence belongs to the TRAFAC class TrmE-Era-EngA-EngB-Septin-like GTPase superfamily. EngB GTPase family. Requires Mg(2+) as cofactor.

In Mus musculus (Mouse), this protein is GTP-binding protein 8 (Gtpbp8).